A 314-amino-acid polypeptide reads, in one-letter code: Aspartate carbamoyltransferase catalytic subunit (314 aa).

Carbamoyl phosphate-binding residues include arginine 53 and threonine 54. Lysine 82 provides a ligand contact to L-aspartate. The carbamoyl phosphate site is built by arginine 103, histidine 131, and glutamine 134. L-aspartate-binding residues include arginine 164 and arginine 230. Carbamoyl phosphate-binding residues include leucine 267 and proline 268.

This sequence belongs to the aspartate/ornithine carbamoyltransferase superfamily. ATCase family. As to quaternary structure, heterooligomer of catalytic and regulatory chains.

The catalysed reaction is carbamoyl phosphate + L-aspartate = N-carbamoyl-L-aspartate + phosphate + H(+). It functions in the pathway pyrimidine metabolism; UMP biosynthesis via de novo pathway; (S)-dihydroorotate from bicarbonate: step 2/3. Functionally, catalyzes the condensation of carbamoyl phosphate and aspartate to form carbamoyl aspartate and inorganic phosphate, the committed step in the de novo pyrimidine nucleotide biosynthesis pathway. The sequence is that of Aspartate carbamoyltransferase catalytic subunit from Methanococcus aeolicus (strain ATCC BAA-1280 / DSM 17508 / OCM 812 / Nankai-3).